The following is a 292-amino-acid chain: Insulin-like growth factor-binding protein 3 (292 aa).

Positions 1–27 (MHPARPALWAAALTALTLLRGPPVARA) are cleaved as a signal peptide. In terms of domain architecture, IGFBP N-terminal spans 36-119 (PVVRCEPCDA…LNGRGFCANA (84 aa)). 6 cysteine pairs are disulfide-bonded: C40/C69, C43/C71, C51/C72, C60/C75, C83/C96, and C90/C116. Residues N118, N124, and N137 are each glycosylated (N-linked (GlcNAc...) asparagine). Disordered stretches follow at residues 127-161 (AYLP…THRV) and 191-211 (YESQ…ETEY). The span at 129 to 139 (LPSQPSPGNTT) shows a compositional bias: polar residues. S149 is subject to Phosphoserine. Positions 192 to 203 (ESQSTDTQNFSS) are enriched in polar residues. N200 is a glycosylation site (N-linked (GlcNAc...) asparagine). Position 202 is a phosphoserine (S202). The 76-residue stretch at 211 to 286 (YGPCRREMED…DTKGKDDVHC (76 aa)) folds into the Thyroglobulin type-1 domain. 3 disulfides stabilise this stretch: C214–C241, C252–C263, and C265–C286.

In terms of assembly, interacts with XLKD1. Binds IGF2 more than IGF1. Forms a ternary complex of about 140 to 150 kDa with IGF1 or IGF2 and a 85 kDa glycoprotein (ALS). Interacts with humanin; humanin competes with importin KPNB1 for binding to IGFBP3, blocking IGFBP3 nuclear import and IGFBP3-mediated apoptosis. Interacts with TMEM219. Interacts with RXRA; this interaction modulates the transcriptional activity of RXRA. Interacts with LRP1; this interaction mediates cell growth inhibition independent of IGF1. Phosphorylated by FAM20C in the extracellular medium. Phosphorylated by CK2; resulting in decreased nuclear localization.

It is found in the secreted. It localises to the nucleus. Its function is as follows. Multifunctional protein that plays a critical role in regulating the availability of IGFs such as IGF1 and IGF2 to their receptors and thereby regulates IGF-mediated cellular processes including proliferation, differentiation, and apoptosis in a cell-type specific manner. Also exhibits IGF-independent antiproliferative and apoptotic effects mediated by its receptor TMEM219/IGFBP-3R. Inhibits the positive effect of humanin on insulin sensitivity. Promotes testicular germ cell apoptosis. Acts via LRP-1/alpha2M receptor, also known as TGF-beta type V receptor, to mediate cell growth inhibition independent of IGF1. Mechanistically, induces serine-specific dephosphorylation of IRS1 or IRS2 upon ligation to its receptor, leading to the inhibitory cascade. In the nucleus, interacts with transcription factors such as retinoid X receptor-alpha/RXRA to regulate transcriptional signaling and apoptosis. The polypeptide is Insulin-like growth factor-binding protein 3 (Igfbp3) (Rattus norvegicus (Rat)).